The primary structure comprises 580 residues: Acyl--CoA ligase GME11374 (580 aa).

The protein belongs to the ATP-dependent AMP-binding enzyme family.

It functions in the pathway secondary metabolite biosynthesis. Functionally, acyl--CoA ligase; part of the gene cluster that mediates the biosynthesis of dibenzodioxocinones such as pestalotiollide B, a novel class of inhibitors against cholesterol ester transfer protein (CEPT). The biosynthesis initiates from condensation of acetate and malonate units catalyzed by the non-reducing PKS pks8/GME11356. Pks8/GME11356 lacks a thioesterase (TE) domain, which is important to the cyclizing of the third ring of atrochrysone carboxylic acid, and the esterase GME11355 might play the role of TE and catalyzes the cyclization reaction of the C ring. The lactamase-like protein GME11357 (or other beta-lactamases in Pestalotiopsis microspora) probably hydrolyzes the thioester bond between the ACP of pks8/GME11356 and the intermediate to release atrochrysone carboxylic acid, which is spontaneously dehydrates to form endocrocin anthrone. Endocrocin anthrone is further converted to emodin via the endocrocin intermediate. Emodin is then oxidized by several enzymes such as the Baeyer-Villiger oxidase GME11358, the oxidoreductase GME11367, the short chain dehydrogenase/reductase GME11373, as well as by other oxidoreductases from the cluster, to modify the A and C rings and open the B ring, and finally yield monodictyphenone. The prenyltransferase GME11375 may catalyze the addition reaction between the C5 side chains and the carbon bone of dibenzodioxocinones. The remaining biochemical reactions to the final product dibenzodioxocinones should be methylation catalyzed by methyltransferase GME11366 and reduction and lactonization reaction catalyzed by a series of oxidordeuctases. The polypeptide is Acyl--CoA ligase GME11374 (Pestalotiopsis microspora).